A 673-amino-acid chain; its full sequence is UvrABC system protein B (673 aa).

A Helicase ATP-binding domain is found at 26–183 (EGLEDGLAHQ…RRLAELQYTR (158 aa)). 39–46 (GVTGSGKT) contributes to the ATP binding site. Residues 92-115 (YYDYYQPEAYVPSSDTFIEKDASV) carry the Beta-hairpin motif. In terms of domain architecture, Helicase C-terminal spans 431-597 (QVDDLLSEIR…GLNKKVVDIL (167 aa)). Residues 633–668 (QQKIHELEGQMMQHAQNLEFEEAAQIRDQLHQLREL) form the UVR domain.

The protein belongs to the UvrB family. In terms of assembly, forms a heterotetramer with UvrA during the search for lesions. Interacts with UvrC in an incision complex.

It localises to the cytoplasm. In terms of biological role, the UvrABC repair system catalyzes the recognition and processing of DNA lesions. A damage recognition complex composed of 2 UvrA and 2 UvrB subunits scans DNA for abnormalities. Upon binding of the UvrA(2)B(2) complex to a putative damaged site, the DNA wraps around one UvrB monomer. DNA wrap is dependent on ATP binding by UvrB and probably causes local melting of the DNA helix, facilitating insertion of UvrB beta-hairpin between the DNA strands. Then UvrB probes one DNA strand for the presence of a lesion. If a lesion is found the UvrA subunits dissociate and the UvrB-DNA preincision complex is formed. This complex is subsequently bound by UvrC and the second UvrB is released. If no lesion is found, the DNA wraps around the other UvrB subunit that will check the other stand for damage. The protein is UvrABC system protein B of Klebsiella pneumoniae (strain 342).